The following is a 301-amino-acid chain: MHMSNARPSKSRTKFLLAFLCFTLMASLFGATALFGPSKAAAASPDDNFSPETLQFLRNNTGLDGEQWNNIMKLINKPEQDDLNWIKYYGYCEDIEDERGYTIGLFGATTGGSRDTHPDGPDLFKAYDAAKGASNPSADGALKRLGINGKMKGSILEIKDSEKVFCGKIKKLQNDAAWRKAMWETFYNVYIRYSVEQARQRGFTSAVTIGSFVDTALNQGATGGSDTLQGLLARSGSSSNEKTFMKNFHAKRTLVVDTNKYNKPPNGKNRVKQWDTLVDMGKMNLKNVDSEIAQVTDWEMK.

The N-terminal stretch at 1 to 42 (MHMSNARPSKSRTKFLLAFLCFTLMASLFGATALFGPSKAAA) is a signal peptide. The active-site Proton donor is the glutamate 79. A disulfide bridge links cysteine 92 with cysteine 166. The Nucleophile role is filled by aspartate 97.

This sequence belongs to the glycosyl hydrolase 46 family.

The protein resides in the secreted. The enzyme catalyses Endohydrolysis of beta-(1-&gt;4)-linkages between D-glucosamine residues in a partly acetylated chitosan.. Functionally, aids in the defense against invading fungal pathogens by degrading their cell wall chitosan. This is Chitosanase (csn) from Niallia circulans (Bacillus circulans).